Consider the following 181-residue polypeptide: Bifunctional protein PyrR (181 aa).

A PRPP-binding motif is present at residues 101-113; the sequence is VILVDDVLFTGRT.

This sequence belongs to the purine/pyrimidine phosphoribosyltransferase family. PyrR subfamily.

The enzyme catalyses UMP + diphosphate = 5-phospho-alpha-D-ribose 1-diphosphate + uracil. Functionally, regulates the transcription of the pyrimidine nucleotide (pyr) operon in response to exogenous pyrimidines. Also displays a weak uracil phosphoribosyltransferase activity which is not physiologically significant. The polypeptide is Bifunctional protein PyrR (Desulfosudis oleivorans (strain DSM 6200 / JCM 39069 / Hxd3) (Desulfococcus oleovorans)).